The chain runs to 418 residues: Actin-related protein 3 (418 aa).

An N-acetylalanine modification is found at Ala2. N6-acetyllysine occurs at positions 240, 244, 251, and 254.

It belongs to the actin family. ARP3 subfamily. As to quaternary structure, component of the Arp2/3 complex composed of ACTR2/ARP2, ACTR3/ARP3, ARPC1B/p41-ARC, ARPC2/p34-ARC, ARPC3/p21-ARC, ARPC4/p20-ARC and ARPC5/p16-ARC. Interacts with WHDC1. Interacts weakly with MEFV. Interacts with AVIL. In terms of assembly, (Microbial infection) Interacts with bacterium B.thailandensis BimA.

Its subcellular location is the cytoplasm. It localises to the cytoskeleton. The protein resides in the cell projection. The protein localises to the nucleus. ATP-binding component of the Arp2/3 complex, a multiprotein complex that mediates actin polymerization upon stimulation by nucleation-promoting factor (NPF). The Arp2/3 complex mediates the formation of branched actin networks in the cytoplasm, providing the force for cell motility. Seems to contact the pointed end of the daughter actin filament. In podocytes, required for the formation of lamellipodia downstream of AVIL and PLCE1 regulation. In addition to its role in the cytoplasmic cytoskeleton, the Arp2/3 complex also promotes actin polymerization in the nucleus, thereby regulating gene transcription and repair of damaged DNA. The Arp2/3 complex promotes homologous recombination (HR) repair in response to DNA damage by promoting nuclear actin polymerization, leading to drive motility of double-strand breaks (DSBs). Plays a role in ciliogenesis. This is Actin-related protein 3 (Actr3) from Mus musculus (Mouse).